The following is a 326-amino-acid chain: ELMO domain-containing protein 1 (326 aa).

The ELMO domain maps to 133–306; sequence QHEEMLLKLW…KFRKRIIKQL (174 aa).

Acts as a GTPase-activating protein (GAP) toward guanine nucleotide exchange factors like ARL2, ARL3, ARF1 and ARF6, but not for GTPases outside the Arf family. In Pongo abelii (Sumatran orangutan), this protein is ELMO domain-containing protein 1 (ELMOD1).